A 212-amino-acid polypeptide reads, in one-letter code: Transcription antitermination protein NusB (212 aa).

This sequence belongs to the NusB family.

Its function is as follows. Involved in transcription antitermination. Required for transcription of ribosomal RNA (rRNA) genes. Binds specifically to the boxA antiterminator sequence of the ribosomal RNA (rrn) operons. This is Transcription antitermination protein NusB from Gloeothece citriformis (strain PCC 7424) (Cyanothece sp. (strain PCC 7424)).